Here is a 327-residue protein sequence, read N- to C-terminus: tRNA-dihydrouridine(20/20a) synthase (327 aa).

FMN contacts are provided by residues 11–13 (PML) and Q63. Residue C93 is the Proton donor of the active site. FMN contacts are provided by residues K132, H165, 205-207 (NGG), and 227-228 (GR).

The protein belongs to the Dus family. DusA subfamily. It depends on FMN as a cofactor.

The enzyme catalyses 5,6-dihydrouridine(20) in tRNA + NADP(+) = uridine(20) in tRNA + NADPH + H(+). It catalyses the reaction 5,6-dihydrouridine(20) in tRNA + NAD(+) = uridine(20) in tRNA + NADH + H(+). The catalysed reaction is 5,6-dihydrouridine(20a) in tRNA + NADP(+) = uridine(20a) in tRNA + NADPH + H(+). It carries out the reaction 5,6-dihydrouridine(20a) in tRNA + NAD(+) = uridine(20a) in tRNA + NADH + H(+). Functionally, catalyzes the synthesis of 5,6-dihydrouridine (D), a modified base found in the D-loop of most tRNAs, via the reduction of the C5-C6 double bond in target uridines. Specifically modifies U20 and U20a in tRNAs. The chain is tRNA-dihydrouridine(20/20a) synthase from Vibrio cholerae serotype O1 (strain ATCC 39315 / El Tor Inaba N16961).